Here is a 259-residue protein sequence, read N- to C-terminus: Pre-mRNA-splicing factor CWC24 (259 aa).

Residues 1–67 (MFRKRLVNKS…HENEGKLQKK (67 aa)) are disordered. Basic and acidic residues predominate over residues 25 to 39 (FSEEKLVASDEEKGS). Serine 33 is modified (phosphoserine). Positions 47–57 (KSGNSRTLQLS) are enriched in polar residues. Over residues 58–67 (HENEGKLQKK) the composition is skewed to basic and acidic residues. Phosphoserine is present on serine 105. The segment at 138 to 166 (DFQPDVCKDYKQTGYCGYGDSCKFLHSRD) adopts a C3H1-type zinc-finger fold. The RING-type zinc finger occupies 199–237 (CTLCKEDYKSPVVTNCGHYFCGSCFAKDMKKGTKCFICH).

This sequence belongs to the CWC24 family. Belongs to the CWC complex (or CEF1-associated complex), a spliceosome sub-complex reminiscent of a late-stage spliceosome composed of the U2, U5 and U6 snRNAs and at least BUD13, BUD31, BRR2, CDC40, CEF1, CLF1, CUS1, CWC2, CWC15, CWC21, CWC22, CWC23, CWC24, CWC25, CWC27, ECM2, HSH155, IST3, ISY1, LEA1, MSL1, NTC20, PRP8, PRP9, PRP11, PRP19, PRP21, PRP22, PRP45, PRP46, SLU7, SMB1, SMD1, SMD2, SMD3, SMX2, SMX3, SNT309, SNU114, SPP2, SYF1, SYF2, RSE1 and YJU2.

Its subcellular location is the nucleus. Involved in pre-mRNA splicing. This is Pre-mRNA-splicing factor CWC24 (CWC24) from Saccharomyces cerevisiae (strain ATCC 204508 / S288c) (Baker's yeast).